The primary structure comprises 389 residues: DNA replication and repair protein RecF (389 aa).

30–37 (GPNGFGKT) provides a ligand contact to ATP.

It belongs to the RecF family.

It is found in the cytoplasm. In terms of biological role, the RecF protein is involved in DNA metabolism; it is required for DNA replication and normal SOS inducibility. RecF binds preferentially to single-stranded, linear DNA. It also seems to bind ATP. The polypeptide is DNA replication and repair protein RecF (Mycolicibacterium gilvum (strain PYR-GCK) (Mycobacterium gilvum (strain PYR-GCK))).